We begin with the raw amino-acid sequence, 257 residues long: Glutamate racemase (257 aa).

Residues 12–13 and 44–45 each bind substrate; these read DS and YG. Catalysis depends on Cys75, which acts as the Proton donor/acceptor. 76 to 77 serves as a coordination point for substrate; the sequence is NT. Catalysis depends on Cys186, which acts as the Proton donor/acceptor. 187–188 serves as a coordination point for substrate; the sequence is TH.

Belongs to the aspartate/glutamate racemases family.

The catalysed reaction is L-glutamate = D-glutamate. It participates in cell wall biogenesis; peptidoglycan biosynthesis. In terms of biological role, provides the (R)-glutamate required for cell wall biosynthesis. This chain is Glutamate racemase, found in Clostridium kluyveri (strain NBRC 12016).